A 462-amino-acid chain; its full sequence is MADGEEPEKKRRRIEELLAEKMAVDGGCGDTGDWEGRWNHVKKFLERSGPFTHPDFEPSTESLQFLLDTCKVLVIGAGGLGCELLKNLALSGFRQIHVIDMDTIDVSNLNRQFLFRPKDVGRPKAEVAAEFLNDRVPNCNVVPHFNKIQDFNDTFYRQFHIIVCGLDSIIARRWINGMLISLLNYEDGVLDPSSIVPLIDGGTEGFKGNARVILPGMTACIECTLELYPPQVNFPMCTIASMPRLPEHCIEYVRMLQWPKEQPFGDGVPLDGDDPEHIQWIFQKSVERASQYNIRGVTYRLTQGVVKRIIPAVASTNAVIAAVCATEVFKIATSAYIPLNNYLVFNDVDGLYTYTFEAERKENCPACSQLPQNIQFSPSAKLQEVLDYLTNSASLQMKSPAITATLEGKNRTLYLQSVTSIEERTRPNLSKTLKELGLVDGQELAVADVTTPQTVLFKLHFT.

Alanine 2 is subject to N-acetylalanine. An interaction with UBE2M N-terminus region spans residues 53-70 (HPDFEPSTESLQFLLDTC). ATP is bound by residues 100–124 (DMDTIDVSNLNRQFLFRPKDVGRPK) and 148–171 (IQDFNDTFYRQFHIIVCGLDSIIA). Interaction with UBE2M N-terminus regions lie at residues 157–161 (RQFHI) and 192–217 (PSSIVPLIDGGTEGFKGNARVILPGM). Positions 227–229 (LYP) are interaction with NEDD8. Residue cysteine 237 is the Glycyl thioester intermediate of the active site. 2 interaction with NAE1 regions span residues 242–248 (MPRLPEH) and 292–295 (YNIR). Residues 331-338 (IATSAYIP) form an interaction with UBE2M N-terminus region. Residues 352 to 357 (YTYTFE) form an interaction with NEDD8 region. The tract at residues 368–462 (SQLPQNIQFS…QTVLFKLHFT (95 aa)) is interaction with UBE2M core domain.

It belongs to the ubiquitin-activating E1 family. UBA3 subfamily. In terms of assembly, heterodimer of UBA3 and NAE1. Interacts with NEDD8, UBE2F and UBE2M. Binds ESR1 and ESR2 with bound steroid ligand. Interacts with TBATA. In terms of tissue distribution, ubiquitously expressed.

The catalysed reaction is ATP + [NEDD8 protein] + [E1 NEDD8-activating enzyme]-L-cysteine = AMP + diphosphate + [E1 NEDD8-activating enzyme]-S-[NEDD8 protein]-yl-L-cysteine.. It participates in protein modification; protein neddylation. With respect to regulation, binding of TP53BP2 to the regulatory subunit NAE1 decreases activity. Catalytic subunit of the dimeric UBA3-NAE1 E1 enzyme. E1 activates NEDD8 by first adenylating its C-terminal glycine residue with ATP, thereafter linking this residue to the side chain of the catalytic cysteine, yielding a NEDD8-UBA3 thioester and free AMP. E1 finally transfers NEDD8 to the catalytic cysteine of UBE2M. Down-regulates steroid receptor activity. Necessary for cell cycle progression. In Rattus norvegicus (Rat), this protein is NEDD8-activating enzyme E1 catalytic subunit (Uba3).